We begin with the raw amino-acid sequence, 420 residues long: MMEVNSTCLDCRTPGTIRTEQDAQDSASQGLTSALAVVLIFTIVVDVLGNILVILSVLRNKKLQNAGNLFVVSLSIADLVVAVYPYPVILIAIFQNGWTLGNIHCQISGFLMGLSVIGSVFNITAIAINRYCYICHSLRYDKLYNQRSTWCYLGLTWILTIIAIVPNFFVGSLQYDPRIFSCTFAQTVSSSYTITVVVVHFIVPLSVVTFCYLRIWVLVIQVKHRVRQDFKQKLTQTDLRNFLTMFVVFVLFAVCWAPLNFIGLAVAINPFHVAPKIPEWLFVLSYFMAYFNSCLNAVIYGVLNQNFRKEYKRILMSLLTPRLLFLDTSRGGTEGLKSKPSPAVTNNNQADMLGEARSLWLSRRNGAKMVIIIRPRKAQIAIIHQIFWPQSSWATCRQDTKITGEEDGCRELCKDGISQR.

At Met1–Ala34 the chain is on the extracellular side. A glycan (N-linked (GlcNAc...) asparagine) is linked at Asn5. The chain crosses the membrane as a helical span at residues Leu35–Leu55. Residues Ser56–Ser73 lie on the Cytoplasmic side of the membrane. Residues Leu74–Phe94 form a helical membrane-spanning segment. Topologically, residues Gln95 to Gln106 are extracellular. Cysteines 105 and 182 form a disulfide. A helical membrane pass occupies residues Ile107–Ala127. At Ile128–Tyr152 the chain is on the cytoplasmic side. Residues Leu153–Leu173 form a helical membrane-spanning segment. At Gln174–Tyr192 the chain is on the extracellular side. Residues Thr193–Leu213 form a helical membrane-spanning segment. The Cytoplasmic portion of the chain corresponds to Arg214–Met245. A helical membrane pass occupies residues Phe246–Val266. Over Ala267–Glu279 the chain is Extracellular. A helical transmembrane segment spans residues Trp280 to Leu303. Residues Asn304–Arg420 are Cytoplasmic-facing.

The protein belongs to the G-protein coupled receptor 1 family. As to expression, moderately expressed in dermal melanophores.

The protein resides in the cell membrane. High affinity receptor for melatonin. Likely to mediate the potent effects of melatonin on pigment aggregation in melanophores. The activity of this receptor is mediated by pertussis toxin sensitive G proteins that inhibit adenylate cyclase activity. The sequence is that of Melatonin receptor type 1C (mtnr1c) from Xenopus laevis (African clawed frog).